The chain runs to 293 residues: MKHGIYYAYWEQEWEADYKYYIEKVAKLGFDILEIAASPLPFYSDIQINELKACAHGNGITLTVGHGPSAEQNLSSPDPDIRKNAKAFYTDLLKRLYKLDVHLIGGALYSYWPIDYTKTIDKKGDWERSVESVREVAKVAEACGVDFCLEVLNRFENYLINTAQEGVDFVKQVDHNNVKVMLDTFHMNIEEDSIGGAIRTAGSYLGHLHTGECNRKVPGRGRIPWVEIGEALADIGYNGSVVMEPFVRMGGTVGSNIKVWRDISNGADEKMLDREAQAALDFSRYVLECHKHS.

The substrate site is built by Tyr6 and Ala107. Residue Glu150 is the Proton donor/acceptor of the active site. Glu150 lines the Mn(2+) pocket. Substrate is bound by residues Glu156 and 183–186 (DTFH). 2 residues coordinate Mn(2+): Asp183 and His209. A substrate-binding site is contributed by Arg215. The Proton donor/acceptor role is filled by Glu244. Glu244 lines the Mn(2+) pocket.

This sequence belongs to the hyi family. As to quaternary structure, homotetramer. The cofactor is Mn(2+). It depends on Co(2+) as a cofactor.

The enzyme catalyses D-allulose = keto-D-fructose. Its function is as follows. Involved in the biosynthesis of D-psicose. Catalyzes the reversible epimerization of D-fructose at the C3 position to yield D-psicose. The enzyme is highly specific for D-psicose and shows very low activity with D-tagatose. The protein is D-psicose 3-epimerase of Ruminiclostridium cellulolyticum (strain ATCC 35319 / DSM 5812 / JCM 6584 / H10) (Clostridium cellulolyticum).